Here is an 868-residue protein sequence, read N- to C-terminus: LPS-assembly protein LptD (868 aa).

Positions 1–24 are cleaved as a signal peptide; that stretch reads MLKGIHKYLLMCFGTVLFTVQANA.

Belongs to the LptD family. Component of the lipopolysaccharide transport and assembly complex. Interacts with LptE and LptA.

It is found in the cell outer membrane. Functionally, together with LptE, is involved in the assembly of lipopolysaccharide (LPS) at the surface of the outer membrane. This is LPS-assembly protein LptD from Francisella tularensis subsp. tularensis (strain FSC 198).